The primary structure comprises 92 residues: Tachykinin-2 (92 aa).

The N-terminal stretch at 1–22 (MIRVGLILCCIFIVGVFEASSA) is a signal peptide. Residues 23–37 (DDILTAHNLIKRSEV) constitute a propeptide that is removed on maturation. The residue at position 49 (Met-49) is a Methionine amide. Positions 52–92 (SEELTRRLIQHPGSMSETSKRGPPKKGDFNPNELKPESNIC) are excised as a propeptide. Residues 61-92 (QHPGSMSETSKRGPPKKGDFNPNELKPESNIC) are disordered.

This sequence belongs to the tachykinin family. As to expression, expressed in the posterior salivary gland and more specifically in the mucus-secreting gland cells.

The protein resides in the secreted. In terms of biological role, tachykinins are active peptides which excite neurons, evoke behavioral responses, are potent vasodilators and secretagogues, and contract (directly or indirectly) many smooth muscles. This is Tachykinin-2 from Octopus vulgaris (Common octopus).